We begin with the raw amino-acid sequence, 356 residues long: UDP-N-acetylglucosamine--N-acetylmuramyl-(pentapeptide) pyrophosphoryl-undecaprenol N-acetylglucosamine transferase (356 aa).

UDP-N-acetyl-alpha-D-glucosamine-binding residues include arginine 166, serine 196, and glutamine 290.

Belongs to the glycosyltransferase 28 family. MurG subfamily.

It is found in the cell membrane. The catalysed reaction is Mur2Ac(oyl-L-Ala-gamma-D-Glu-L-Lys-D-Ala-D-Ala)-di-trans,octa-cis-undecaprenyl diphosphate + UDP-N-acetyl-alpha-D-glucosamine = beta-D-GlcNAc-(1-&gt;4)-Mur2Ac(oyl-L-Ala-gamma-D-Glu-L-Lys-D-Ala-D-Ala)-di-trans,octa-cis-undecaprenyl diphosphate + UDP + H(+). It functions in the pathway cell wall biogenesis; peptidoglycan biosynthesis. Functionally, cell wall formation. Catalyzes the transfer of a GlcNAc subunit on undecaprenyl-pyrophosphoryl-MurNAc-pentapeptide (lipid intermediate I) to form undecaprenyl-pyrophosphoryl-MurNAc-(pentapeptide)GlcNAc (lipid intermediate II). This chain is UDP-N-acetylglucosamine--N-acetylmuramyl-(pentapeptide) pyrophosphoryl-undecaprenol N-acetylglucosamine transferase, found in Staphylococcus aureus (strain USA300).